The chain runs to 132 residues: Agouti-signaling protein (132 aa).

Residues 1 to 22 (MDVTRLLLATLLVFLCFFTVYS) form the signal peptide. A glycan (N-linked (GlcNAc...) asparagine) is linked at Asn39. Residues 62–93 (ISRKEAEKKRSSKKEASMKKVAQPRTPLSAPC) form a disordered region. Positions 63–79 (SRKEAEKKRSSKKEASM) are enriched in basic and acidic residues. Intrachain disulfides connect Cys93–Cys108, Cys100–Cys114, Cys107–Cys125, Cys111–Cys132, and Cys116–Cys123. One can recognise an Agouti domain in the interval 93–132 (CVATRDSCKPPAPACCDPCASCQCRFFRSACSCRVLSLNC).

The protein localises to the secreted. Involved in the regulation of melanogenesis. The binding of ASP to MC1R precludes alpha-MSH initiated signaling and thus blocks production of cAMP, leading to a down-regulation of eumelanogenesis (brown/black pigment) and thus increasing synthesis of pheomelanin (yellow/red pigment). The chain is Agouti-signaling protein (ASIP) from Trachypithecus auratus (Javan langur).